The chain runs to 546 residues: Intermembrane transport protein PqiB (546 aa).

The Cytoplasmic segment spans residues 1–15 (MESNNGEAKIQKVKN). The helical transmembrane segment at 16–36 (WSPVWIFPIVTALIGAWVLFY) threads the bilayer. At 37–546 (HYSHQGPEVT…KDPEPKRAKQ (510 aa)) the chain is on the periplasmic side. MCE/MlaD regions lie at residues 42 to 133 (GPEV…LQPG), 158 to 217 (IRVI…NNVR), and 285 to 389 (HIDY…LDFY). Residues 437–464 (IEQATSTLSESQRTMKNLQTTLDSMNKI) are a coiled coil.

The protein belongs to the PqiB family. Homohexamer. May form a complex composed of PqiA, PqiB and PqiC. Interacts with PqiC.

The protein resides in the cell inner membrane. Its function is as follows. Forms a tunnel that spans the entire periplasmic space. Could be implicated in lipid transport between the inner membrane and the outer membrane. Binds phospholipids. Required for outer membrane homeostasis. Contributes to membrane integrity. The sequence is that of Intermembrane transport protein PqiB from Escherichia coli (strain K12).